The sequence spans 910 residues: Seizure 6-like protein 2 (910 aa).

The N-terminal stretch at methionine 1–glycine 27 is a signal peptide. Residues leucine 28–asparagine 844 lie on the Extracellular side of the membrane. The interval serine 41–serine 48 is O-glycosylated at one site. The segment at glutamate 65 to glutamate 152 is disordered. A compositionally biased stretch (pro residues) spans leucine 123–glycine 145. Cysteines 173 and 202 form a disulfide. The CUB 1 domain maps to cysteine 173 to tyrosine 286. 3 N-linked (GlcNAc...) asparagine glycosylation sites follow: asparagine 176, asparagine 222, and asparagine 247. The 60-residue stretch at leucine 288–alanine 347 folds into the Sushi 1 domain. Disulfide bonds link cysteine 290/cysteine 330, cysteine 316/cysteine 345, cysteine 349/cysteine 376, cysteine 464/cysteine 508, cysteine 491/cysteine 523, and cysteine 527/cysteine 553. Asparagine 332, asparagine 355, asparagine 373, asparagine 473, and asparagine 517 each carry an N-linked (GlcNAc...) asparagine glycan. Residues cysteine 349–phenylalanine 459 enclose the CUB 2 domain. Residues aspartate 462–alanine 525 enclose the Sushi 2 domain. The CUB 3 domain occupies cysteine 527–valine 638. Residue asparagine 641 is glycosylated (N-linked (GlcNAc...) asparagine). Sushi domains are found at residues aspartate 642–lysine 701, methionine 703–leucine 766, and glutamate 769–valine 830. 6 disulfide bridges follow: cysteine 644–cysteine 686, cysteine 672–cysteine 699, cysteine 705–cysteine 747, cysteine 733–cysteine 764, cysteine 771–cysteine 813, and cysteine 799–cysteine 828. Residues leucine 845–isoleucine 865 traverse the membrane as a helical segment. Topologically, residues tyrosine 866–isoleucine 910 are cytoplasmic.

This sequence belongs to the SEZ6 family. In terms of processing, O-glycosylated with core 1 or possibly core 8 glycans.

It is found in the cell membrane. The protein resides in the endoplasmic reticulum membrane. Functionally, may contribute to specialized endoplasmic reticulum functions in neurons. In Homo sapiens (Human), this protein is Seizure 6-like protein 2 (SEZ6L2).